A 286-amino-acid chain; its full sequence is Cytotoxin (286 aa).

Residues 267–286 (TFYNYASLVPDLETRVRSAE) constitute a propeptide that is removed on maturation.

Belongs to the aerolysin family.

Its subcellular location is the secreted. In terms of biological role, cytotoxin is thought to form hydrophilic pores in cell membranes. In Pseudomonas aeruginosa, this protein is Cytotoxin (ctx).